The chain runs to 357 residues: UPF0283 membrane protein BMEA_A1074 (357 aa).

Positions 1 to 36 (MSDKTPRKPTAFRLEQPARVSAASEQEEPRRPRAVK) are disordered. Basic and acidic residues predominate over residues 27–36 (EEPRRPRAVK). 2 helical membrane-spanning segments follow: residues 78–98 (ILFG…TEDL) and 109–129 (LGWT…AIIL).

Belongs to the UPF0283 family.

The protein resides in the cell inner membrane. The protein is UPF0283 membrane protein BMEA_A1074 of Brucella melitensis biotype 2 (strain ATCC 23457).